The following is a 221-amino-acid chain: GFP-like non-fluorescent chromoprotein (221 aa).

Positions 62–64 form a cross-link, 2-iminomethyl-5-imidazolinone (Gln-Gly); that stretch reads QYG. (E)-2,3-didehydrotyrosine is present on tyrosine 63.

Belongs to the GFP family. Homotetramer. Post-translationally, contains a chromophore consisting of modified amino acid residues. The chromophore is formed by autocatalytic backbone condensation between Xaa-N and Gly-(N+2), oxidation of Tyr-(N+1) to didehydrotyrosine, and formation of a double bond to the alpha-amino nitrogen of residue Xaa-N. Maturation of the chromophore requires nothing other than molecular oxygen.

Functionally, thought to play a role in photoprotection of the coral's resident symbiont microalgae's photosystems from photoinhibition caused by high light levels found near the surface of coral reefs. In Montipora efflorescens (Pore coral), this protein is GFP-like non-fluorescent chromoprotein.